The chain runs to 333 residues: COMPASS-like H3K4 histone methylase component WDR5B (333 aa).

8 WD repeats span residues 1–40 (MPSG…KTLE), 41–80 (GHTA…LIHR), 83–122 (GHSS…ECLK), 126–167 (GHTN…RMIK), 169–207 (HSMP…CLKT), 211–252 (DKSP…KVYT), 253–295 (GHTN…ILQR), and 298–333 (GHTD…KQDA).

In terms of assembly, unlike WDR5A, does not interact with RBL or TRO.

This chain is COMPASS-like H3K4 histone methylase component WDR5B, found in Arabidopsis thaliana (Mouse-ear cress).